Here is a 169-residue protein sequence, read N- to C-terminus: MSKPICSTGLRWLWLVVVVLVLDFASKQWILGNFVLGQSQPLIPSFNLFYARNYGAAFSFLADHGGWQRWFFAGIAVAIVAVLLVMMYRSSAQQKLNNIAYAFIIGGALGNLFDRLWHGFVVDFIDFYVGNWHYPTFNLADSFICVGAAMIVLEGFLSPANKSAKSKGE.

3 helical membrane passes run 12–32 (WLWL…WILG), 70–90 (WFFA…MYRS), and 102–122 (AFII…GFVV). Catalysis depends on residues Asp-123 and Asp-141. The helical transmembrane segment at 137–157 (FNLADSFICVGAAMIVLEGFL) threads the bilayer.

It belongs to the peptidase A8 family.

It is found in the cell inner membrane. The enzyme catalyses Release of signal peptides from bacterial membrane prolipoproteins. Hydrolyzes -Xaa-Yaa-Zaa-|-(S,diacylglyceryl)Cys-, in which Xaa is hydrophobic (preferably Leu), and Yaa (Ala or Ser) and Zaa (Gly or Ala) have small, neutral side chains.. It functions in the pathway protein modification; lipoprotein biosynthesis (signal peptide cleavage). Functionally, this protein specifically catalyzes the removal of signal peptides from prolipoproteins. The chain is Lipoprotein signal peptidase from Serratia proteamaculans (strain 568).